We begin with the raw amino-acid sequence, 79 residues long: uncharacterized protein (79 aa).

Belongs to the BolA/IbaG family.

This is an uncharacterized protein from Buchnera aphidicola subsp. Baizongia pistaciae (strain Bp).